The following is a 401-amino-acid chain: S-adenosylmethionine synthase (401 aa).

136-141 (GTGSSD) contacts ATP. Residues 278 to 305 (GDDGSVGRGNRSNGLITPSRPMSMEATS) form a disordered region.

It belongs to the AdoMet synthase 2 family. The cofactor is Mg(2+).

The enzyme catalyses L-methionine + ATP + H2O = S-adenosyl-L-methionine + phosphate + diphosphate. The protein operates within amino-acid biosynthesis; S-adenosyl-L-methionine biosynthesis; S-adenosyl-L-methionine from L-methionine: step 1/1. Its function is as follows. Catalyzes the formation of S-adenosylmethionine from methionine and ATP. The polypeptide is S-adenosylmethionine synthase (Methanococcoides burtonii (strain DSM 6242 / NBRC 107633 / OCM 468 / ACE-M)).